The chain runs to 285 residues: uncharacterized protein (285 aa).

The 99-residue stretch at 184-282 (HSICNWVQDN…GLTPGEYSAR (99 aa)) folds into the HTH araC/xylS-type domain. 2 consecutive DNA-binding regions (H-T-H motif) follow at residues 201–222 (ESVA…AQHG) and 249–272 (IHEV…RRQF).

This is an uncharacterized protein from Escherichia coli (strain K12).